The chain runs to 326 residues: tRNA-modifying protein YgfZ (326 aa).

Positions 27 and 189 each coordinate folate.

The protein belongs to the tRNA-modifying YgfZ family.

It localises to the cytoplasm. Folate-binding protein involved in regulating the level of ATP-DnaA and in the modification of some tRNAs. It is probably a key factor in regulatory networks that act via tRNA modification, such as initiation of chromosomal replication. The sequence is that of tRNA-modifying protein YgfZ from Escherichia coli O7:K1 (strain IAI39 / ExPEC).